A 727-amino-acid chain; its full sequence is Polyribonucleotide nucleotidyltransferase (727 aa).

Residues Asp-488 and Asp-494 each coordinate Mg(2+). The KH domain maps to 555 to 614 (PKLYTMKINPEKIRDVIGKGGATIRALTDETGCQINIEEDGTITIAATEAAKADEAKRRI). The S1 motif domain maps to 624–692 (GKIYEGPVTK…DKGRVKLSMK (69 aa)). The disordered stretch occupies residues 691-727 (MKALADRPAGDSGRPAPAERGERRERRDGGASEQQQQ). A compositionally biased stretch (basic and acidic residues) spans 707-720 (PAERGERRERRDGG).

Belongs to the polyribonucleotide nucleotidyltransferase family. Mg(2+) serves as cofactor.

It is found in the cytoplasm. It catalyses the reaction RNA(n+1) + phosphate = RNA(n) + a ribonucleoside 5'-diphosphate. Its function is as follows. Involved in mRNA degradation. Catalyzes the phosphorolysis of single-stranded polyribonucleotides processively in the 3'- to 5'-direction. In Acidovorax sp. (strain JS42), this protein is Polyribonucleotide nucleotidyltransferase.